A 474-amino-acid polypeptide reads, in one-letter code: Tubulin gamma-1 chain (474 aa).

142 to 148 (AGGTGSG) contributes to the GTP binding site.

The protein belongs to the tubulin family. As to quaternary structure, gamma-tubulin complex is composed of gamma-tubulin and GCP proteins.

The protein resides in the cytoplasm. Its subcellular location is the cytoskeleton. The protein localises to the microtubule organizing center. It localises to the nucleus. It is found in the cell cortex. In terms of biological role, tubulin is the major constituent of microtubules. The gamma chain is found at microtubule organizing centers (MTOC) such as the spindle poles, suggesting that it is involved in the minus-end nucleation of microtubule assembly. Its function is as follows. Gamma-tubulin complex is essential for the control of microtubular network remodeling in the course of initiation and development of giant-feeding cells, and for the successful reproduction of nematodes (e.g. Meloidogyne spp.) in their plant hosts. In Arabidopsis thaliana (Mouse-ear cress), this protein is Tubulin gamma-1 chain (TUBG1).